Reading from the N-terminus, the 160-residue chain is Phosphopantetheine adenylyltransferase (160 aa).

Residue threonine 11 participates in substrate binding. Residues 11–12 (TF) and histidine 19 contribute to the ATP site. Positions 43, 75, and 89 each coordinate substrate. ATP is bound by residues 90–92 (GLR), glutamate 100, and 125–131 (YSFLSSS).

It belongs to the bacterial CoaD family. As to quaternary structure, homohexamer. The cofactor is Mg(2+).

Its subcellular location is the cytoplasm. It carries out the reaction (R)-4'-phosphopantetheine + ATP + H(+) = 3'-dephospho-CoA + diphosphate. It functions in the pathway cofactor biosynthesis; coenzyme A biosynthesis; CoA from (R)-pantothenate: step 4/5. Its function is as follows. Reversibly transfers an adenylyl group from ATP to 4'-phosphopantetheine, yielding dephospho-CoA (dPCoA) and pyrophosphate. This is Phosphopantetheine adenylyltransferase from Listeria monocytogenes serotype 4b (strain CLIP80459).